Reading from the N-terminus, the 338-residue chain is Phenylalanine--tRNA ligase alpha subunit (338 aa).

Residue Glu-252 participates in Mg(2+) binding.

This sequence belongs to the class-II aminoacyl-tRNA synthetase family. Phe-tRNA synthetase alpha subunit type 1 subfamily. As to quaternary structure, tetramer of two alpha and two beta subunits. Mg(2+) serves as cofactor.

The protein localises to the cytoplasm. It catalyses the reaction tRNA(Phe) + L-phenylalanine + ATP = L-phenylalanyl-tRNA(Phe) + AMP + diphosphate + H(+). The sequence is that of Phenylalanine--tRNA ligase alpha subunit from Pseudomonas aeruginosa (strain ATCC 15692 / DSM 22644 / CIP 104116 / JCM 14847 / LMG 12228 / 1C / PRS 101 / PAO1).